Consider the following 283-residue polypeptide: Lactoylglutathione lyase GLX1 (283 aa).

N-acetylalanine is present on alanine 2. 2 VOC domains span residues 17–141 and 147–275; these read RFLH…LIQR and PFCQ…LVDN. Residue histidine 20 participates in Zn(2+) binding. Position 24 (arginine 24) interacts with substrate. Residue glutamate 71 coordinates Zn(2+). Residues asparagine 75 and histidine 89 each coordinate substrate. The Zn(2+) site is built by histidine 89, glutamate 137, and glutamine 150. The active-site Proton donor/acceptor is the glutamate 137. Substrate is bound by residues glutamine 150 and arginine 154. Residue glutamine 150 coordinates a divalent metal cation. Position 201 (glutamate 201) interacts with Zn(2+). Position 201 (glutamate 201) interacts with a divalent metal cation. A substrate-binding site is contributed by asparagine 205. Glutamine 219 is an a divalent metal cation binding site. A substrate-binding site is contributed by 251 to 252; sequence PL. Residue valine 271 coordinates a divalent metal cation.

The protein belongs to the glyoxalase I family. Homodimer. It depends on Zn(2+) as a cofactor. Phosphorylated by SnRK2.8.

The catalysed reaction is (R)-S-lactoylglutathione = methylglyoxal + glutathione. It functions in the pathway secondary metabolite metabolism; methylglyoxal degradation; (R)-lactate from methylglyoxal: step 1/2. Its function is as follows. Catalyzes the conversion of hemimercaptal, formed from methylglyoxal and glutathione, to S-lactoylglutathione. The polypeptide is Lactoylglutathione lyase GLX1 (Arabidopsis thaliana (Mouse-ear cress)).